The primary structure comprises 113 residues: Putative pterin-4-alpha-carbinolamine dehydratase (113 aa).

Belongs to the pterin-4-alpha-carbinolamine dehydratase family.

It carries out the reaction (4aS,6R)-4a-hydroxy-L-erythro-5,6,7,8-tetrahydrobiopterin = (6R)-L-erythro-6,7-dihydrobiopterin + H2O. The polypeptide is Putative pterin-4-alpha-carbinolamine dehydratase (Nitrosospira multiformis (strain ATCC 25196 / NCIMB 11849 / C 71)).